The primary structure comprises 321 residues: uncharacterized protein (321 aa).

A disordered region spans residues 1–80 (MQGGQEVGRE…GELSGGWGEF (80 aa)).

This is an uncharacterized protein from Mus musculus (Mouse).